The chain runs to 502 residues: Maturase K (502 aa).

Belongs to the intron maturase 2 family. MatK subfamily.

Its subcellular location is the plastid. The protein localises to the chloroplast. In terms of biological role, usually encoded in the trnK tRNA gene intron. Probably assists in splicing its own and other chloroplast group II introns. This is Maturase K from Tilia americana (American basswood).